The following is a 248-amino-acid chain: 2,3-bisphosphoglycerate-dependent phosphoglycerate mutase (248 aa).

Substrate-binding positions include 8–15 (RHGESTWN), 21–22 (TG), arginine 60, 87–90 (ERHY), lysine 98, 114–115 (RR), and 183–184 (GN). Histidine 9 functions as the Tele-phosphohistidine intermediate in the catalytic mechanism. Residue glutamate 87 is the Proton donor/acceptor of the active site.

This sequence belongs to the phosphoglycerate mutase family. BPG-dependent PGAM subfamily. As to quaternary structure, homodimer.

It catalyses the reaction (2R)-2-phosphoglycerate = (2R)-3-phosphoglycerate. It participates in carbohydrate degradation; glycolysis; pyruvate from D-glyceraldehyde 3-phosphate: step 3/5. In terms of biological role, catalyzes the interconversion of 2-phosphoglycerate and 3-phosphoglycerate. In Paraburkholderia phymatum (strain DSM 17167 / CIP 108236 / LMG 21445 / STM815) (Burkholderia phymatum), this protein is 2,3-bisphosphoglycerate-dependent phosphoglycerate mutase.